The following is a 414-amino-acid chain: NADH-dependent flavin oxidoreductase iccE (414 aa).

FMN-binding positions include 25-28 and Q107; that span reads TAIA. Residue 188–191 coordinates substrate; the sequence is HASH. 347–348 provides a ligand contact to FMN; sequence AR.

The protein belongs to the NADH:flavin oxidoreductase/NADH oxidase family.

It catalyses the reaction 8-epi-ilicicolin H = ilicicolin H. The protein operates within mycotoxin biosynthesis. Functionally, NADH-dependent flavin oxidoreductase; part of the gene cluster that mediates the biosynthesis of ilicicolin H, a 4-hydroxy-2-pyridonealkaloid that has potent and broad antifungal activities by inhibiting the mitochondrial respiration chain. IccE acts as an epimerase and catalyzes the conversion of 8-epi-ilicicolin H into the final product ilicicolin H. The biosynthesis of ilicicolin H starts with formation of the tetramic acid by the hybrid PKS-NRPS synthetase iccA with the partnering trans-enoyl reductase iccB since iccA lacks a designated enoylreductase (ER) domain. The cytochrome P450 monooxygenase iccC then catalyzes the ring expansion of the tetramate to the acyclic 2-pyridone. The pericyclase iccD further converts the acyclic 2-pyridone into 8-epi-ilicicolin H. Finally, the epimerase iccE converts 8-epi-ilicicolin H into ilicicolin H via epimerization. IccA to iccE are sufficient for ilicicolin H biosynthesis and the roles of the remaining enzymes, iccF, iccG and iccH within the pathway have still to be determined. This Talaromyces variabilis (Penicillium variabile) protein is NADH-dependent flavin oxidoreductase iccE.